Here is a 189-residue protein sequence, read N- to C-terminus: Small ribosomal subunit protein uS5 (189 aa).

Residues 22–85 (FVDKLVAINR…EAAKRELIFV (64 aa)) form the S5 DRBM domain.

Belongs to the universal ribosomal protein uS5 family. Part of the 30S ribosomal subunit. Contacts proteins S4 and S8.

Functionally, with S4 and S12 plays an important role in translational accuracy. In terms of biological role, located at the back of the 30S subunit body where it stabilizes the conformation of the head with respect to the body. This is Small ribosomal subunit protein uS5 from Rhizobium etli (strain CIAT 652).